The sequence spans 106 residues: Tubulin-specific chaperone A (106 aa).

Residue Ser-94 is modified to Phosphoserine.

This sequence belongs to the TBCA family.

The protein resides in the cytoplasm. It localises to the cytoskeleton. Tubulin-folding protein; involved in the early step of the tubulin folding pathway. The chain is Tubulin-specific chaperone A (RBL2) from Saccharomyces cerevisiae (strain ATCC 204508 / S288c) (Baker's yeast).